Consider the following 287-residue polypeptide: Probable phosphite transport system-binding protein PtxB (287 aa).

The N-terminal stretch at 1 to 23 is a signal peptide; the sequence is MKRLSALLLTCLLSAVSSLSALA.

It belongs to the phosphate/phosphite/phosphonate binding protein family.

In terms of biological role, probably forms part of a binding-protein-dependent phosphite transporter. Required for oxidation of phosphite to phosphate. The polypeptide is Probable phosphite transport system-binding protein PtxB (ptxB) (Stutzerimonas stutzeri (Pseudomonas stutzeri)).